A 155-amino-acid polypeptide reads, in one-letter code: dCTP deaminase (155 aa).

Residues 79 to 84 (RSSLAR), Asp-95, Gln-124, and Tyr-138 contribute to the dCTP site.

This sequence belongs to the dCTP deaminase family. As to quaternary structure, homotrimer.

The catalysed reaction is dCTP + H2O + H(+) = dUTP + NH4(+). It functions in the pathway pyrimidine metabolism; dUMP biosynthesis; dUMP from dCTP (dUTP route): step 1/2. Functionally, catalyzes the deamination of dCTP to dUTP. The polypeptide is dCTP deaminase (Thermococcus kodakarensis (strain ATCC BAA-918 / JCM 12380 / KOD1) (Pyrococcus kodakaraensis (strain KOD1))).